Here is a 2280-residue protein sequence, read N- to C-terminus: Protein Ycf2 (2280 aa).

1634–1641 is an ATP binding site; the sequence is GSIGTGRS.

This sequence belongs to the Ycf2 family.

The protein localises to the plastid. Its subcellular location is the chloroplast stroma. Its function is as follows. Probable ATPase of unknown function. Its presence in a non-photosynthetic plant (Epifagus virginiana) and experiments in tobacco indicate that it has an essential function which is probably not related to photosynthesis. This chain is Protein Ycf2, found in Eucalyptus globulus subsp. globulus (Tasmanian blue gum).